A 298-amino-acid polypeptide reads, in one-letter code: Glycine--tRNA ligase alpha subunit (298 aa).

Belongs to the class-II aminoacyl-tRNA synthetase family. In terms of assembly, tetramer of two alpha and two beta subunits.

It localises to the cytoplasm. The catalysed reaction is tRNA(Gly) + glycine + ATP = glycyl-tRNA(Gly) + AMP + diphosphate. This Helicobacter pylori (strain Shi470) protein is Glycine--tRNA ligase alpha subunit.